The chain runs to 403 residues: Phosphoglycerate kinase (403 aa).

Residues 21–23 (DFN), R36, 59–62 (HLGR), R118, and R151 contribute to the substrate site. Residues K202, E328, and 354 to 357 (GGDS) contribute to the ATP site.

This sequence belongs to the phosphoglycerate kinase family. In terms of assembly, monomer.

It localises to the cytoplasm. The enzyme catalyses (2R)-3-phosphoglycerate + ATP = (2R)-3-phospho-glyceroyl phosphate + ADP. It participates in carbohydrate degradation; glycolysis; pyruvate from D-glyceraldehyde 3-phosphate: step 2/5. The polypeptide is Phosphoglycerate kinase (Akkermansia muciniphila (strain ATCC BAA-835 / DSM 22959 / JCM 33894 / BCRC 81048 / CCUG 64013 / CIP 107961 / Muc)).